A 393-amino-acid chain; its full sequence is Na(+)/H(+) antiporter NhaA (393 aa).

12 helical membrane-spanning segments follow: residues 23-43 (AGGI…NSPF), 58-78 (LSLA…LVGL), 96-116 (MLPG…FAVL), 126-146 (GWAV…SLLG), 155-175 (VFLA…IAIF), 178-198 (AEIS…LFVM), 201-221 (MGVV…FFVF), 224-244 (GVHA…KPAP), 265-285 (VAFI…FKGL), 298-318 (ILLG…WLAI), 334-354 (LYGV…IGLL), and 367-387 (IGVL…LRAA).

Belongs to the NhaA Na(+)/H(+) (TC 2.A.33) antiporter family.

It is found in the cell inner membrane. The catalysed reaction is Na(+)(in) + 2 H(+)(out) = Na(+)(out) + 2 H(+)(in). Na(+)/H(+) antiporter that extrudes sodium in exchange for external protons. This Brucella suis (strain ATCC 23445 / NCTC 10510) protein is Na(+)/H(+) antiporter NhaA.